The chain runs to 179 residues: MSEETKEEIKNEKVDEEVTEELTEEALEDIVEEEINELDEAQKLATEWENKFLRVSAEMQNVQRRGNEERLQLIKYRSQDLAKKILSSLDNLERALAVEGLTDDVKKGLEMVQESLISALKEEGVEEVSYESFDHNIHMAVQTVPADDEHPADSIVQVFQKGYQLHERLLRPAMVVVAQ.

Residues 1 to 20 (MSEETKEEIKNEKVDEEVTE) are disordered.

This sequence belongs to the GrpE family. Homodimer.

It is found in the cytoplasm. Functionally, participates actively in the response to hyperosmotic and heat shock by preventing the aggregation of stress-denatured proteins, in association with DnaK and GrpE. It is the nucleotide exchange factor for DnaK and may function as a thermosensor. Unfolded proteins bind initially to DnaJ; upon interaction with the DnaJ-bound protein, DnaK hydrolyzes its bound ATP, resulting in the formation of a stable complex. GrpE releases ADP from DnaK; ATP binding to DnaK triggers the release of the substrate protein, thus completing the reaction cycle. Several rounds of ATP-dependent interactions between DnaJ, DnaK and GrpE are required for fully efficient folding. The polypeptide is Protein GrpE (Lactococcus lactis subsp. lactis (strain IL1403) (Streptococcus lactis)).